A 342-amino-acid polypeptide reads, in one-letter code: Probable allantoicase (342 aa).

It belongs to the allantoicase family.

The enzyme catalyses allantoate + H2O = (S)-ureidoglycolate + urea. It functions in the pathway nitrogen metabolism; (S)-allantoin degradation; (S)-ureidoglycolate from allantoate (aminidohydrolase route): step 1/1. Its function is as follows. Utilization of purines as secondary nitrogen sources, when primary sources are limiting. The protein is Probable allantoicase of Schizosaccharomyces pombe (strain 972 / ATCC 24843) (Fission yeast).